The sequence spans 127 residues: Small ribosomal subunit protein uS11 (127 aa).

The protein belongs to the universal ribosomal protein uS11 family. In terms of assembly, part of the 30S ribosomal subunit. Interacts with proteins S7 and S18. Binds to IF-3.

Its function is as follows. Located on the platform of the 30S subunit, it bridges several disparate RNA helices of the 16S rRNA. Forms part of the Shine-Dalgarno cleft in the 70S ribosome. The sequence is that of Small ribosomal subunit protein uS11 from Flavobacterium psychrophilum (strain ATCC 49511 / DSM 21280 / CIP 103535 / JIP02/86).